The sequence spans 290 residues: HTH-type transcriptional activator RhaR (290 aa).

One can recognise an HTH araC/xylS-type domain in the interval 179–277; it reads DLIMSALQQS…GMTPRDYRQR (99 aa). 2 consecutive DNA-binding regions (H-T-H motif) follow at residues 196–217 and 244–267; these read ADFC…RQQT and ISDI…TREA.

As to quaternary structure, binds DNA as a dimer.

Its subcellular location is the cytoplasm. Functionally, activates expression of the rhaSR operon in response to L-rhamnose. This is HTH-type transcriptional activator RhaR from Yersinia pestis bv. Antiqua (strain Antiqua).